A 449-amino-acid chain; its full sequence is Glucose-6-phosphate isomerase (449 aa).

The Proton donor role is filled by Glu291. Catalysis depends on residues His312 and Lys426.

This sequence belongs to the GPI family.

Its subcellular location is the cytoplasm. It catalyses the reaction alpha-D-glucose 6-phosphate = beta-D-fructose 6-phosphate. It functions in the pathway carbohydrate biosynthesis; gluconeogenesis. It participates in carbohydrate degradation; glycolysis; D-glyceraldehyde 3-phosphate and glycerone phosphate from D-glucose: step 2/4. In terms of biological role, catalyzes the reversible isomerization of glucose-6-phosphate to fructose-6-phosphate. The protein is Glucose-6-phosphate isomerase of Streptococcus equi subsp. zooepidemicus (strain MGCS10565).